The sequence spans 405 residues: L-rhamnonate dehydratase (405 aa).

Substrate-binding residues include His33 and Arg59. 3 residues coordinate Mg(2+): Asp226, Glu252, and Glu280. Residue His329 is the Proton acceptor of the active site. Residue Glu349 participates in substrate binding.

Belongs to the mandelate racemase/muconate lactonizing enzyme family. RhamD subfamily. In terms of assembly, homooctamer; tetramer of dimers. Mg(2+) is required as a cofactor.

It carries out the reaction L-rhamnonate = 2-dehydro-3-deoxy-L-rhamnonate + H2O. Catalyzes the dehydration of L-rhamnonate to 2-keto-3-deoxy-L-rhamnonate (KDR). The polypeptide is L-rhamnonate dehydratase (Escherichia coli O6:H1 (strain CFT073 / ATCC 700928 / UPEC)).